Here is a 197-residue protein sequence, read N- to C-terminus: Tic20 family protein Ycf60 (197 aa).

5 consecutive transmembrane segments (helical) span residues 3–23, 47–66, 81–101, 118–138, and 141–161; these read IIIA…GVGV, FGYY…PDVL, LVVV…MSYF, VSQA…LNAL, and MILM…LTMG.

It belongs to the Tic20 family.

It is found in the plastid. The protein resides in the chloroplast membrane. The polypeptide is Tic20 family protein Ycf60 (ycf60) (Cyanidioschyzon merolae (strain NIES-3377 / 10D) (Unicellular red alga)).